A 574-amino-acid polypeptide reads, in one-letter code: Protein OBERON 2 (574 aa).

Polar residues-rich tracts occupy residues 1–10 (MGTSSGSNHP) and 65–76 (SMSQKTEPDSME). Residues 1–76 (MGTSSGSNHP…SQKTEPDSME (76 aa)) are disordered. A PHD-type zinc finger spans residues 226–291 (LCMCTICNKF…VFKCRACNRT (66 aa)). A coiled-coil region spans residues 416–524 (KKARMALETC…LFEKIKLQEN (109 aa)).

In terms of assembly, self-interacts. Interacts with OBE1, OBE3 and OBE4. Binds to VPg of pea seed borne mosaic virus (PSbMV), turnip mosaic virus (TuMV) and lettuce mosaic virus (LMV), but not with VPg of tobacco etch virus (TEV), cowpea mosaic virus (CPMV), tomato black ring virus (TBRV) and grapevine fan leaf virus (GFLV). As to expression, expressed in roots, seedlings, stems, leaves, flowers and siliques, especially in the vasculature.

It is found in the nucleus. In terms of biological role, probable transcription factor that acts together with OBE1 for the maintenance and/or establishment of both the shoot and root meristems, probably by controlling the expression of the meristem genes such as WUS, PLT1 and PLT2 and of genes required for auxin responses. Promotes cell meristematic activity via the WUSCHEL-CLAVATA pathway. Involved in the development of the basal pole and in auxin-mediated root and vascular development in the embryo. Confers sensitivity to turnip mosaic virus (TuMV) probably by promoting viral movement and multiplication via interaction with TuMV VPg. The chain is Protein OBERON 2 from Arabidopsis thaliana (Mouse-ear cress).